The following is a 265-amino-acid chain: Imidazole glycerol phosphate synthase subunit HisF (265 aa).

Catalysis depends on residues aspartate 17 and aspartate 136.

Belongs to the HisA/HisF family. Heterodimer of HisH and HisF.

Its subcellular location is the cytoplasm. It carries out the reaction 5-[(5-phospho-1-deoxy-D-ribulos-1-ylimino)methylamino]-1-(5-phospho-beta-D-ribosyl)imidazole-4-carboxamide + L-glutamine = D-erythro-1-(imidazol-4-yl)glycerol 3-phosphate + 5-amino-1-(5-phospho-beta-D-ribosyl)imidazole-4-carboxamide + L-glutamate + H(+). It participates in amino-acid biosynthesis; L-histidine biosynthesis; L-histidine from 5-phospho-alpha-D-ribose 1-diphosphate: step 5/9. Its function is as follows. IGPS catalyzes the conversion of PRFAR and glutamine to IGP, AICAR and glutamate. The HisF subunit catalyzes the cyclization activity that produces IGP and AICAR from PRFAR using the ammonia provided by the HisH subunit. This is Imidazole glycerol phosphate synthase subunit HisF from Mycobacterium avium (strain 104).